The sequence spans 250 residues: 5'-nucleotidase SurE (250 aa).

4 residues coordinate a divalent metal cation: aspartate 8, aspartate 9, serine 39, and asparagine 95.

The protein belongs to the SurE nucleotidase family. It depends on a divalent metal cation as a cofactor.

The protein resides in the cytoplasm. It catalyses the reaction a ribonucleoside 5'-phosphate + H2O = a ribonucleoside + phosphate. Functionally, nucleotidase that shows phosphatase activity on nucleoside 5'-monophosphates. The chain is 5'-nucleotidase SurE from Cupriavidus necator (strain ATCC 17699 / DSM 428 / KCTC 22496 / NCIMB 10442 / H16 / Stanier 337) (Ralstonia eutropha).